Reading from the N-terminus, the 90-residue chain is MIKNPFSGIILKEENKDNRGSAEFQVVSFTNRIRRLTSHLELHKKDYLSQRGLRKILGKRQRLLAYLSKKNRVRYKELIGRLDIRETKIR.

It belongs to the universal ribosomal protein uS15 family. In terms of assembly, part of the 30S ribosomal subunit.

It is found in the plastid. The protein resides in the chloroplast. This Panax ginseng (Korean ginseng) protein is Small ribosomal subunit protein uS15c (rps15).